We begin with the raw amino-acid sequence, 88 residues long: Acylphosphatase (88 aa).

The Acylphosphatase-like domain maps to 3-88 (RLVALVKGRV…EAGLKGFHVY (86 aa)). Residues Arg18 and Asn36 contribute to the active site.

Belongs to the acylphosphatase family.

It catalyses the reaction an acyl phosphate + H2O = a carboxylate + phosphate + H(+). The polypeptide is Acylphosphatase (acyP) (Thermus thermophilus (strain ATCC BAA-163 / DSM 7039 / HB27)).